Consider the following 360-residue polypeptide: Phenylalanine--tRNA ligase alpha subunit (360 aa).

Glutamate 260 is a binding site for Mg(2+).

This sequence belongs to the class-II aminoacyl-tRNA synthetase family. Phe-tRNA synthetase alpha subunit type 1 subfamily. As to quaternary structure, tetramer of two alpha and two beta subunits. It depends on Mg(2+) as a cofactor.

The protein localises to the cytoplasm. It carries out the reaction tRNA(Phe) + L-phenylalanine + ATP = L-phenylalanyl-tRNA(Phe) + AMP + diphosphate + H(+). The sequence is that of Phenylalanine--tRNA ligase alpha subunit from Bradyrhizobium sp. (strain ORS 278).